The primary structure comprises 326 residues: Cobalamin biosynthesis protein CobD (326 aa).

4 helical membrane-spanning segments follow: residues 58–78 (MRGVATILILLAASILLGVVL), 81–101 (LFDVLGAVGFILEAITVAVFL), 157–177 (FSDGVVAPALWYAVAGLPGLL), and 304–324 (VFYRACTTLAAASAVLVLPFL).

It belongs to the CobD/CbiB family.

It is found in the cell membrane. The protein operates within cofactor biosynthesis; adenosylcobalamin biosynthesis. Its function is as follows. Converts cobyric acid to cobinamide by the addition of aminopropanol on the F carboxylic group. This chain is Cobalamin biosynthesis protein CobD, found in Sinorhizobium fredii (strain NBRC 101917 / NGR234).